A 200-amino-acid chain; its full sequence is TATA-box-binding protein 1 (200 aa).

An N-acetylthreonine modification is found at Thr-2. A run of 2 repeats spans residues 25-101 and 115-192.

The protein belongs to the TBP family. As to quaternary structure, belongs to the TFIID complex together with the TBP-associated factors (TAFs). Binds DNA as monomer. Interacts with TAF1 (via N-terminus). Interacts with MEE12/CCG1. Associates with PWP2 in the nucleus. Component of a nuclear protein complex containing at least TATA binding proteins (TBPs, e.g. TBP1 and TBP2) and ATX1.

It is found in the nucleus. General transcription factor that functions at the core of the DNA-binding multiprotein factor TFIID. Binding of TFIID to the TATA box is the initial transcriptional step of the pre-initiation complex (PIC), playing a role in the activation of eukaryotic genes transcribed by RNA polymerase II. The protein is TATA-box-binding protein 1 of Arabidopsis thaliana (Mouse-ear cress).